The primary structure comprises 342 residues: tRNA-specific 2-thiouridylase MnmA 2 (342 aa).

Cys62 serves as the catalytic Nucleophile. Cysteines 62 and 160 form a disulfide. Gly86 serves as a coordination point for ATP. The segment at 110–112 (KDQ) is interaction with tRNA. The Cysteine persulfide intermediate role is filled by Cys160. The segment at 268 to 269 (RY) is interaction with tRNA.

It belongs to the MnmA/TRMU family.

The protein resides in the cytoplasm. It catalyses the reaction S-sulfanyl-L-cysteinyl-[protein] + uridine(34) in tRNA + AH2 + ATP = 2-thiouridine(34) in tRNA + L-cysteinyl-[protein] + A + AMP + diphosphate + H(+). Its function is as follows. Catalyzes the 2-thiolation of uridine at the wobble position (U34) of tRNA, leading to the formation of s(2)U34. The protein is tRNA-specific 2-thiouridylase MnmA 2 of Syntrophus aciditrophicus (strain SB).